Reading from the N-terminus, the 132-residue chain is MDAQLEWASSLVPKRQLQQQQQQEQQQQQQQDFHKDQLMTVGMRIRQRVDQGYASRTPSTSDASLQPGVIRDYSSVIVPQFTRSPLPTANSLPPMLINQRTMSTEASSLEKWDVAEPAAEHEAMVNGSKRRL.

Disordered stretches follow at residues 1-41 and 108-132; these read MDAQ…LMTV and SLEK…KRRL. The span at 16–31 shows a compositional bias: low complexity; sequence QLQQQQQQEQQQQQQQ. Basic and acidic residues predominate over residues 108 to 123; sequence SLEKWDVAEPAAEHEA.

The protein belongs to the DIF1/spd1 family. In terms of assembly, interacts with RNR2 and RNR4. Post-translationally, phosphorylated by DUN1 in response to DNA damage which leads to its degradation.

The protein localises to the cytoplasm. The protein resides in the nucleus. Mediates the nuclear localization of RNR2 and RNR4, 2 subunits of the ribonucleotide reductase. This Saccharomyces cerevisiae (strain JAY291) (Baker's yeast) protein is Damage-regulated import facilitator 1 (DIF1).